The sequence spans 378 residues: Mannitol-1-phosphate 5-dehydrogenase (378 aa).

4–15 (SVHFGAGNIGRG) is an NAD(+) binding site.

It belongs to the mannitol dehydrogenase family.

It catalyses the reaction D-mannitol 1-phosphate + NAD(+) = beta-D-fructose 6-phosphate + NADH + H(+). The sequence is that of Mannitol-1-phosphate 5-dehydrogenase from Streptococcus pneumoniae (strain ATCC 700669 / Spain 23F-1).